The primary structure comprises 337 residues: G-protein coupled receptor 65 (337 aa).

The Extracellular segment spans residues 1–5 (MNSTC). N-linked (GlcNAc...) asparagine glycosylation is present at N2. 2 disulfide bridges follow: C5/C160 and C87/C170. A helical transmembrane segment spans residues 6-42 (IEEQHDLDHYLFPIVYIFVIIVSIPANIGSLCVSFLQ). Over 43-46 (AKKE) the chain is Cytoplasmic. A helical membrane pass occupies residues 47 to 77 (SELGIYLFSLSLSDLLYALTLPLWIDYTWNK). At 78–82 (DNWTF) the chain is on the extracellular side. A glycan (N-linked (GlcNAc...) asparagine) is linked at N79. The chain crosses the membrane as a helical span at residues 83-118 (SPALCKGSAFLMYMNFYSSTAFLTCIAVDRYLAVVY). The Cytoplasmic portion of the chain corresponds to 119 to 126 (PLKFFFLR). Residues 127–153 (TRRFALMVSLSIWILETIFNAVMLWED) traverse the membrane as a helical segment. At 154–174 (ETVVEYCDAEKSNFTLCYDKY) the chain is on the extracellular side. The segment at 154–174 (ETVVEYCDAEKSNFTLCYDKY) is extracellular loop 2 (ECL2). The N-linked (GlcNAc...) asparagine glycan is linked to N166. Residues 175-212 (PLEKWQINLNLFRTCTGYAIPLVTILICNRKVYQAVRH) form a helical membrane-spanning segment. At 213–216 (NKAT) the chain is on the cytoplasmic side. The helical transmembrane segment at 217-252 (ENKEKKRIIKLLVSITVTFVLCFTPFHVMLLIRCIL) threads the bilayer. Residues 253 to 264 (EHAVNFEDHSNS) lie on the Extracellular side of the membrane. Residues 265-293 (GKRTYTMYRITVALTSLNCVADPILYCFV) traverse the membrane as a helical segment. Residues 294–337 (TETGRYDMWNILKFCTGRCNTSQRQRKRILSVSTKDTMELEVLE) are Cytoplasmic-facing.

It belongs to the G-protein coupled receptor 1 family. Predominantly expressed in thymus, spleen, lymph nodes, small intestine, lung, placenta and peripheral blood leukocytes.

Its subcellular location is the cell membrane. The protein localises to the early endosome membrane. The protein resides in the late endosome membrane. Activated by a network of residues that connects an extracellular-facing cavity to Glu-142, a conserved charged residue buried in the transmembrane core of the receptor. Protonation likely drives conformational changes in extracellular loop 2 (ECL2), which stabilizes movement of transmembrane 3 (TM3) and a series of rearrangements that connect the extracellular-facing cavity to Glu-142, a residue only conserved in proton-sensing G-protein coupled receptors. Activated by BTB09089, a positive allosteric modulator. Its function is as follows. Proton-sensing G-protein coupled receptor activated by extracellular pH, which is required to monitor pH changes and generate adaptive reactions. Activated by an optimal pH of 7.4. Ligand binding causes a conformation change that triggers signaling via guanine nucleotide-binding proteins (G proteins) and modulates the activity of downstream effectors, such as adenylate cyclase. GPR65 is mainly coupled to G(s) G proteins and mediates activation of adenylate cyclase activity. May also act as a receptor for the glycosphingolipid psychosine (PSY) and several related glycosphingolipids. Plays a role in immune response by maintaining lysosome function and regulating T-cell metabolism. Acts as a regulator of inflammation by mediating pH-sensing of extracellular acidification which takes place in inflamed tissues: activation regulates endo-lysosomal function of immune cells and T-cell metabolism. Constitutively active in endosomes and stimulates adenylate cyclase production from endosomes independently from extracellular pH changes. In Homo sapiens (Human), this protein is G-protein coupled receptor 65.